The chain runs to 427 residues: Serine hydroxymethyltransferase (427 aa).

120–122 is a (6S)-5,6,7,8-tetrahydrofolate binding site; that stretch reads GHI. K226 carries the N6-(pyridoxal phosphate)lysine modification.

This sequence belongs to the SHMT family. As to quaternary structure, homodimer. Pyridoxal 5'-phosphate is required as a cofactor.

The protein localises to the cytoplasm. It participates in amino-acid biosynthesis; glycine biosynthesis; glycine from L-serine: step 1/1. Functionally, catalyzes the reversible interconversion of serine and glycine with a modified folate serving as the one-carbon carrier. Also exhibits a pteridine-independent aldolase activity toward beta-hydroxyamino acids, producing glycine and aldehydes, via a retro-aldol mechanism. In Pyrococcus horikoshii (strain ATCC 700860 / DSM 12428 / JCM 9974 / NBRC 100139 / OT-3), this protein is Serine hydroxymethyltransferase.